We begin with the raw amino-acid sequence, 249 residues long: Triosephosphate isomerase (249 aa).

A substrate-binding site is contributed by 9–11; the sequence is NWK. The active-site Electrophile is His-91. Residue Glu-163 is the Proton acceptor of the active site. Residues Gly-169, Ser-209, and 230–231 each bind substrate; that span reads GG.

Belongs to the triosephosphate isomerase family. As to quaternary structure, homodimer.

The protein localises to the cytoplasm. It carries out the reaction D-glyceraldehyde 3-phosphate = dihydroxyacetone phosphate. Its pathway is carbohydrate biosynthesis; gluconeogenesis. It participates in carbohydrate degradation; glycolysis; D-glyceraldehyde 3-phosphate from glycerone phosphate: step 1/1. Functionally, involved in the gluconeogenesis. Catalyzes stereospecifically the conversion of dihydroxyacetone phosphate (DHAP) to D-glyceraldehyde-3-phosphate (G3P). The protein is Triosephosphate isomerase of Halorhodospira halophila (strain DSM 244 / SL1) (Ectothiorhodospira halophila (strain DSM 244 / SL1)).